A 189-amino-acid polypeptide reads, in one-letter code: Thymidine kinase (189 aa).

ATP is bound by residues 9–16 (GTMNSGKS) and 85–88 (DEAQ). Glutamate 86 functions as the Proton acceptor in the catalytic mechanism. Cysteine 143, cysteine 146, cysteine 180, and histidine 183 together coordinate Zn(2+).

This sequence belongs to the thymidine kinase family. Homotetramer.

The protein resides in the cytoplasm. The enzyme catalyses thymidine + ATP = dTMP + ADP + H(+). This Lactococcus lactis subsp. lactis (strain IL1403) (Streptococcus lactis) protein is Thymidine kinase.